The following is a 400-amino-acid chain: Acetate kinase (400 aa).

Mg(2+) is bound at residue N8. K15 is a binding site for ATP. Residue R89 participates in substrate binding. D146 (proton donor/acceptor) is an active-site residue. ATP contacts are provided by residues 206-210, 283-285, and 331-335; these read HVGNG, DMR, and GMGEN. E383 is a binding site for Mg(2+).

The protein belongs to the acetokinase family. In terms of assembly, homodimer. Mg(2+) is required as a cofactor. It depends on Mn(2+) as a cofactor.

The protein localises to the cytoplasm. It carries out the reaction acetate + ATP = acetyl phosphate + ADP. It functions in the pathway metabolic intermediate biosynthesis; acetyl-CoA biosynthesis; acetyl-CoA from acetate: step 1/2. Its function is as follows. Catalyzes the formation of acetyl phosphate from acetate and ATP. Can also catalyze the reverse reaction. This is Acetate kinase from Streptococcus equi subsp. zooepidemicus (strain MGCS10565).